The primary structure comprises 632 residues: MGTLQEKVRRFQKKTITELRDRQNADGSWTFCFEGPIMTNSFFILLLTSLDEGENEKELISSLAAGIHAKQQPDGTFINYPDETRGNLTATVQGYVGMLASGCFHRTEPHMKKAEQFIISHGGLRHVHFMTKWMLAANGLYPWPALYLPLSLMALPPTLPIHFYQFSSYARIHFAPMAVTLNQRFVLINRNISSLHHLDPHMTKNPFTWLRSDAFEERDLTSILLHWKRVFHAPFAFQQLGLQTAKTYMLDRIEKDGTLYSYASATIYMVYSLLSLGVSRYSPIIRRAITGIKSLVTKCNGIPYLENSTSTVWDTALISYALQKNGVTETDGSVTKAADFLLERQHTKIADWSVKNPNSVPGGWGFSNINTNNPDCDDTTAVLKAIPRNHSPAAWERGVSWLLSMQNNDGGFSAFEKNVNHPLIRLLPLESAEDAAVDPSTADLTGRVLHFLGEKVGFTEKHQHIQRAVKWLFEHQEQNGSWYGRWGVCYIYGTWAALTGMHACGVDRKHPGIQKALRWLKSIQNDDGSWGESCKSAEIKTYVPLHRGTIVQTAWALDALLTYENSEHPSVVKGMQYLTDSSSHSADSLAYPAGIGLPKQFYIRYHSYPYVFSLLAVGKYLDSIEKETANET.

D377 serves as the catalytic Proton donor. PFTB repeat units lie at residues 395 to 436, 465 to 505, and 513 to 554; these read WERG…EDAA, IQRA…HACG, and IQKA…VQTA.

The protein belongs to the terpene cyclase/mutase family.

The protein localises to the cell membrane. The catalysed reaction is sporulenol = (R)-tetraprenyl-beta-curcumene + H2O. It functions in the pathway secondary metabolite biosynthesis; hopanoid biosynthesis. Functionally, catalyzes the cyclization of tetraprenyl beta-curcumene into sporulenol. The polypeptide is Sporulenol synthase (sqhC) (Bacillus subtilis (strain 168)).